The primary structure comprises 282 residues: NADPH-dependent 7-cyano-7-deazaguanine reductase (282 aa).

A substrate-binding site is contributed by 88–90; that stretch reads IES. 90–91 is an NADPH binding site; sequence SK. The Thioimide intermediate role is filled by cysteine 190. Aspartate 197 functions as the Proton donor in the catalytic mechanism. Substrate is bound at residue 229–230; sequence HE. 258–259 contacts NADPH; sequence RG.

It belongs to the GTP cyclohydrolase I family. QueF type 2 subfamily. Homodimer.

It localises to the cytoplasm. The enzyme catalyses 7-aminomethyl-7-carbaguanine + 2 NADP(+) = 7-cyano-7-deazaguanine + 2 NADPH + 3 H(+). Its pathway is tRNA modification; tRNA-queuosine biosynthesis. Functionally, catalyzes the NADPH-dependent reduction of 7-cyano-7-deazaguanine (preQ0) to 7-aminomethyl-7-deazaguanine (preQ1). This is NADPH-dependent 7-cyano-7-deazaguanine reductase from Salmonella heidelberg (strain SL476).